The sequence spans 393 residues: NAD(P)H-quinone oxidoreductase subunit H, chloroplastic (393 aa).

The protein belongs to the complex I 49 kDa subunit family. In terms of assembly, NDH is composed of at least 16 different subunits, 5 of which are encoded in the nucleus.

The protein localises to the plastid. It localises to the chloroplast thylakoid membrane. It catalyses the reaction a plastoquinone + NADH + (n+1) H(+)(in) = a plastoquinol + NAD(+) + n H(+)(out). The enzyme catalyses a plastoquinone + NADPH + (n+1) H(+)(in) = a plastoquinol + NADP(+) + n H(+)(out). NDH shuttles electrons from NAD(P)H:plastoquinone, via FMN and iron-sulfur (Fe-S) centers, to quinones in the photosynthetic chain and possibly in a chloroplast respiratory chain. The immediate electron acceptor for the enzyme in this species is believed to be plastoquinone. Couples the redox reaction to proton translocation, and thus conserves the redox energy in a proton gradient. In Anthoceros angustus (Hornwort), this protein is NAD(P)H-quinone oxidoreductase subunit H, chloroplastic.